We begin with the raw amino-acid sequence, 54 residues long: Ovomucoid (54 aa).

Residues 4–54 enclose the Kazal-like domain; sequence VDCSDYPKPVCTLEDMPLCGSDNITYHNKCYFCNAVAHSNGTLTFSHFGKC. Intrachain disulfides connect cysteine 6-cysteine 36, cysteine 14-cysteine 33, and cysteine 22-cysteine 54. N-linked (GlcNAc...) asparagine glycosylation occurs at asparagine 43.

It localises to the secreted. The chain is Ovomucoid from Carpococcyx renauldi (Coral-billed ground-cuckoo).